The chain runs to 230 residues: 7-cyano-7-deazaguanine synthase (230 aa).

Leu8–Thr18 contacts ATP. Zn(2+)-binding residues include Cys186, Cys196, Cys199, and Cys202.

The protein belongs to the QueC family. Zn(2+) serves as cofactor.

The catalysed reaction is 7-carboxy-7-deazaguanine + NH4(+) + ATP = 7-cyano-7-deazaguanine + ADP + phosphate + H2O + H(+). Its pathway is purine metabolism; 7-cyano-7-deazaguanine biosynthesis. In terms of biological role, catalyzes the ATP-dependent conversion of 7-carboxy-7-deazaguanine (CDG) to 7-cyano-7-deazaguanine (preQ(0)). The polypeptide is 7-cyano-7-deazaguanine synthase (Xylella fastidiosa (strain M23)).